A 476-amino-acid chain; its full sequence is ATP synthase subunit beta, mitochondrial (476 aa).

156–163 (GAGVGKTV) contacts ATP.

In terms of assembly, F-type ATP synthases have 2 components, the catalytic core F(1) and the membrane-embedded component F(0), linked together by a central stalk and a peripheral stalk. The central stalk, also called rotor shaft, is often seen as part of F(1). The peripheral stalk is seen as part of F(0). F(0) contains the membrane channel next to the rotor. F-type ATP synthases form dimers but each monomer functions independently in ATP generation. The dimer consists of 18 different polypeptides: ATP1 (subunit alpha, part of F(1), 3 molecules per monomer), ATP2 (subunit beta, part of F(1), 3 molecules per monomer), ATP3 (subunit gamma, part of the central stalk), ATP4 (subunit b, part of the peripheral stalk), ATP5/OSCP (subunit 5/OSCP, part of the peripheral stalk), ATP6 (subunit a, part of the peripheral stalk), ATP7 (subunit d, part of the peripheral stalk), ATP8 (subunit 8, part of the peripheral stalk), OLI1 (subunit c, part of the rotor, 10 molecules per monomer), ATP14 (subunit h, part of the peripheral stalk), ATP15 (subunit epsilon, part of the central stalk), ATP16 (subunit delta, part of the central stalk), ATP17 (subunit f, part of the peripheral stalk), ATP18 (subunit i/j, part of the peripheral stalk). Dimer-specific subunits are ATP19 (subunit k, at interface between monomers), ATP20 (subunit g, at interface between monomers), TIM11 (subunit e, at interface between monomers). Also contains subunit L.

It is found in the mitochondrion inner membrane. The enzyme catalyses ATP + H2O + 4 H(+)(in) = ADP + phosphate + 5 H(+)(out). Its function is as follows. Mitochondrial membrane ATP synthase (F(1)F(0) ATP synthase or Complex V) produces ATP from ADP in the presence of a proton gradient across the membrane which is generated by electron transport complexes of the respiratory chain. F-type ATP synthases consist of two structural domains, F(1) - containing the extramembraneous catalytic core, and F(0) - containing the membrane proton channel, linked together by a central stalk and a peripheral stalk. During catalysis, ATP synthesis in the catalytic domain of F(1) is coupled via a rotary mechanism of the central stalk subunits to proton translocation. Subunits alpha/ATP1 and beta/ATP2 form the catalytic core in F(1). Rotation of the central stalk against the surrounding alpha/ATP1(3)beta/ATP2(3) subunits leads to hydrolysis of ATP in three separate catalytic sites on the beta/ATP2 subunits. The sequence is that of ATP synthase subunit beta, mitochondrial from Pichia angusta (Yeast).